Consider the following 260-residue polypeptide: Alpha-acetolactate decarboxylase (260 aa).

Belongs to the alpha-acetolactate decarboxylase family.

It carries out the reaction (2S)-2-acetolactate + H(+) = (R)-acetoin + CO2. The protein operates within polyol metabolism; (R,R)-butane-2,3-diol biosynthesis; (R,R)-butane-2,3-diol from pyruvate: step 2/3. Functionally, converts acetolactate into acetoin, which can be excreted by the cells. This may be a mechanism for controlling the internal pH of cells in the stationary stage. The sequence is that of Alpha-acetolactate decarboxylase (budA) from Klebsiella aerogenes (Enterobacter aerogenes).